A 352-amino-acid chain; its full sequence is Histidinol-phosphate aminotransferase (352 aa).

N6-(pyridoxal phosphate)lysine is present on Lys221.

The protein belongs to the class-II pyridoxal-phosphate-dependent aminotransferase family. Histidinol-phosphate aminotransferase subfamily. In terms of assembly, homodimer. Pyridoxal 5'-phosphate serves as cofactor.

The catalysed reaction is L-histidinol phosphate + 2-oxoglutarate = 3-(imidazol-4-yl)-2-oxopropyl phosphate + L-glutamate. Its pathway is amino-acid biosynthesis; L-histidine biosynthesis; L-histidine from 5-phospho-alpha-D-ribose 1-diphosphate: step 7/9. The chain is Histidinol-phosphate aminotransferase from Staphylococcus aureus (strain bovine RF122 / ET3-1).